The sequence spans 626 residues: Membrane protein insertase YidC (626 aa).

A run of 5 helical transmembrane segments spans residues 8-28 (LILA…LFPP), 399-419 (MGLA…PLAY), 469-489 (LPIL…FVTL), 527-547 (SIMA…SMWL), and 563-583 (IFAW…SGLL).

Belongs to the OXA1/ALB3/YidC family. Type 1 subfamily. As to quaternary structure, interacts with the Sec translocase complex via SecD. Specifically interacts with transmembrane segments of nascent integral membrane proteins during membrane integration.

Its subcellular location is the cell inner membrane. In terms of biological role, required for the insertion and/or proper folding and/or complex formation of integral membrane proteins into the membrane. Involved in integration of membrane proteins that insert both dependently and independently of the Sec translocase complex, as well as at least some lipoproteins. Aids folding of multispanning membrane proteins. The polypeptide is Membrane protein insertase YidC (Jannaschia sp. (strain CCS1)).